The sequence spans 309 residues: Protein FdhE (309 aa).

It belongs to the FdhE family.

The protein resides in the cytoplasm. Functionally, necessary for formate dehydrogenase activity. The protein is Protein FdhE of Shigella boydii serotype 18 (strain CDC 3083-94 / BS512).